Here is a 1047-residue protein sequence, read N- to C-terminus: UPF0182 protein Mlut_14990 (1047 aa).

Composition is skewed to gly residues over residues 1-27 (MSFG…GQSG) and 49-59 (GPGGPFGGGGS). The disordered stretch occupies residues 1–66 (MSFGQGGGGP…GGSSAARGRG (66 aa)). 7 consecutive transmembrane segments (helical) span residues 71 to 91 (PSAL…FVVF), 114 to 134 (VLAK…AVWL), 168 to 188 (LVFL…AMNG), 214 to 234 (FFMA…SVVL), 266 to 286 (AHIG…FWLN), 314 to 334 (AILA…VVSG), and 341 to 361 (IGTA…PFIV). Disordered regions lie at residues 544-568 (GAPA…TFSG), 941-965 (GDSG…PTAP), and 1007-1047 (EALK…TPSG). Over residues 555–565 (TADSQEDTAYT) the composition is skewed to polar residues. Residues 1015 to 1037 (ADDALGGDAPAQEQAPAEASPAP) show a composition bias toward low complexity. Pro residues predominate over residues 1038-1047 (SSSPSPTPSG).

It belongs to the UPF0182 family.

The protein resides in the cell membrane. This Micrococcus luteus (strain ATCC 4698 / DSM 20030 / JCM 1464 / CCM 169 / CCUG 5858 / IAM 1056 / NBRC 3333 / NCIMB 9278 / NCTC 2665 / VKM Ac-2230) (Micrococcus lysodeikticus) protein is UPF0182 protein Mlut_14990.